The chain runs to 103 residues: Large ribosomal subunit protein bL21 (103 aa).

This sequence belongs to the bacterial ribosomal protein bL21 family. Part of the 50S ribosomal subunit. Contacts protein L20.

Its function is as follows. This protein binds to 23S rRNA in the presence of protein L20. The chain is Large ribosomal subunit protein bL21 from Shewanella baltica (strain OS223).